Consider the following 1137-residue polypeptide: Voltage-dependent calcium channel subunit alpha-2/delta-4 (1137 aa).

Positions 1 to 19 are cleaved as a signal peptide; that stretch reads MVCGCSALLPLPNPRPTMP. Topologically, residues 20 to 1115 are extracellular; that stretch reads ATPNFLANPS…AQDCGGASDT (1096 aa). An N-linked (GlcNAc...) asparagine glycan is attached at N201. In terms of domain architecture, VWFA spans 291–473; the sequence is DIVILVDVSG…ENVMEYLHVL (183 aa). Residues D297, S299, and S301 each contribute to the a divalent metal cation site. Residues 297–301 carry the MIDAS-like motif motif; it reads DVSGS. A disulfide bridge links C447 with C1097. A Cache domain is found at 487–580; that stretch reads WTEAYMDSKL…RPLYREGKKL (94 aa). The N-linked (GlcNAc...) asparagine glycan is linked to N664. A helical membrane pass occupies residues 1116–1136; it reads SASPPLLLLPVCAWGLLPQLL. Position 1137 (R1137) is a topological domain, cytoplasmic.

The protein belongs to the calcium channel subunit alpha-2/delta family. As to quaternary structure, dimer formed of alpha-2-2 and delta-2 chains; disulfide-linked. Voltage-dependent calcium channels are multisubunit complexes, consisting of alpha-1 (CACNA1), alpha-2 (CACNA2D), beta (CACNB) and delta (CACNA2D) subunits in a 1:1:1:1 ratio. Interacts with CACNA1C and CACNB3. In terms of processing, may be proteolytically processed into subunits alpha-2-4 and delta-4 that are disulfide-linked. It is however unclear whether such cleavage really takes place in vivo and has a functional role. In terms of tissue distribution, predominantly expressed in certain types of endocrine cells. Present in the Paneth cells of the small intestine. Also present in the erythroblasts in the fetal liver, in the cells of the zona reticularis of the adrenal gland and in the basophils of the pituitary. Present at low level in some brain regions such as the cerebellum (at protein level).

The protein localises to the membrane. In terms of biological role, the alpha-2/delta subunit of voltage-dependent calcium channels regulates calcium current density and activation/inactivation kinetics of the calcium channel. This is Voltage-dependent calcium channel subunit alpha-2/delta-4 (CACNA2D4) from Homo sapiens (Human).